Here is a 336-residue protein sequence, read N- to C-terminus: NADH-quinone oxidoreductase subunit H (336 aa).

8 helical membrane passes run 9–29 (LVWI…LTYA), 77–97 (FLFA…VIPF), 116–136 (LGVM…IIAG), 156–176 (ISYE…TGSL), 188–208 (LPYW…VSIL), 236–256 (IPFA…SSIM), 275–295 (IVPG…CFLI), and 315–335 (VFLP…AFNI).

The protein belongs to the complex I subunit 1 family. NDH-1 is composed of 14 different subunits. Subunits NuoA, H, J, K, L, M, N constitute the membrane sector of the complex.

The protein localises to the cell inner membrane. The catalysed reaction is a quinone + NADH + 5 H(+)(in) = a quinol + NAD(+) + 4 H(+)(out). Its function is as follows. NDH-1 shuttles electrons from NADH, via FMN and iron-sulfur (Fe-S) centers, to quinones in the respiratory chain. The immediate electron acceptor for the enzyme in this species is believed to be ubiquinone. Couples the redox reaction to proton translocation (for every two electrons transferred, four hydrogen ions are translocated across the cytoplasmic membrane), and thus conserves the redox energy in a proton gradient. This subunit may bind ubiquinone. The chain is NADH-quinone oxidoreductase subunit H from Neorickettsia sennetsu (strain ATCC VR-367 / Miyayama) (Ehrlichia sennetsu).